Reading from the N-terminus, the 305-residue chain is Energy-coupling factor transporter ATP-binding protein EcfA2 (305 aa).

The ABC transporter domain occupies 13–262 (LQNVDITFTN…KNLLQELLIE (250 aa)). Position 55–62 (55–62 (GSTGSGKS)) interacts with ATP.

This sequence belongs to the ABC transporter superfamily. Energy-coupling factor EcfA family. As to quaternary structure, forms a stable energy-coupling factor (ECF) transporter complex composed of 2 membrane-embedded substrate-binding proteins (S component), 2 ATP-binding proteins (A component) and 2 transmembrane proteins (T component).

It is found in the cell membrane. ATP-binding (A) component of a common energy-coupling factor (ECF) ABC-transporter complex. Unlike classic ABC transporters this ECF transporter provides the energy necessary to transport a number of different substrates. This chain is Energy-coupling factor transporter ATP-binding protein EcfA2, found in Spiroplasma kunkelii.